Consider the following 96-residue polypeptide: Muconolactone Delta-isomerase (96 aa).

The protein belongs to the muconolactone Delta-isomerase family. In terms of assembly, homodecamer.

The enzyme catalyses (S)-muconolactone = (4,5-dihydro-5-oxofuran-2-yl)-acetate. It functions in the pathway aromatic compound metabolism; beta-ketoadipate pathway; 5-oxo-4,5-dihydro-2-furylacetate from catechol: step 3/3. The chain is Muconolactone Delta-isomerase (catC) from Pseudomonas putida (Arthrobacter siderocapsulatus).